The sequence spans 150 residues: Ribonuclease K6 (150 aa).

Positions 1–23 (MVLCFPLLLLLLVLWGPVCLLHA) are cleaved as a signal peptide. Residue H38 is the Proton acceptor of the active site. Disulfide bonds link C46–C104, C60–C114, C78–C129, and C85–C92. N-linked (GlcNAc...) asparagine glycosylation is present at N55. Substrate is bound by residues 61-65 (KHQNT) and K86. N100 carries N-linked (GlcNAc...) asparagine glycosylation. Residue R105 coordinates substrate. Catalysis depends on H145, which acts as the Proton donor.

The protein belongs to the pancreatic ribonuclease family. In terms of assembly, interacts (via N-terminus) with bacterial lipopolysaccharide (LPS).

It is found in the secreted. The protein localises to the lysosome. The protein resides in the cytoplasmic granule. Ribonuclease which shows a preference for the pyrimidines uridine and cytosine. Has potent antibacterial activity against a range of Gram-positive and Gram-negative bacteria, including P.aeruginosa, A.baumanii, M.luteus, S.aureus, E.faecalis, E.faecium, S.saprophyticus and E.coli. Causes loss of bacterial membrane integrity, and also promotes agglutination of Gram-negative bacteria. Probably contributes to urinary tract sterility. Bactericidal activity is independent of RNase activity. The polypeptide is Ribonuclease K6 (RNASE6) (Miopithecus talapoin (Angolan talapoin)).